The following is a 284-amino-acid chain: Formamidopyrimidine-DNA glycosylase (284 aa).

Residue Pro2 is the Schiff-base intermediate with DNA of the active site. Glu3 (proton donor) is an active-site residue. Lys59 serves as the catalytic Proton donor; for beta-elimination activity. 2 residues coordinate DNA: His94 and Arg113. The FPG-type zinc finger occupies 239 to 273 (KVHTKKDQPCSVCNQLIVKKKINGRGSYFCLNCQK). Arg263 (proton donor; for delta-elimination activity) is an active-site residue.

It belongs to the FPG family. As to quaternary structure, monomer. Zn(2+) serves as cofactor.

It carries out the reaction Hydrolysis of DNA containing ring-opened 7-methylguanine residues, releasing 2,6-diamino-4-hydroxy-5-(N-methyl)formamidopyrimidine.. The catalysed reaction is 2'-deoxyribonucleotide-(2'-deoxyribose 5'-phosphate)-2'-deoxyribonucleotide-DNA = a 3'-end 2'-deoxyribonucleotide-(2,3-dehydro-2,3-deoxyribose 5'-phosphate)-DNA + a 5'-end 5'-phospho-2'-deoxyribonucleoside-DNA + H(+). In terms of biological role, involved in base excision repair of DNA damaged by oxidation or by mutagenic agents. Acts as a DNA glycosylase that recognizes and removes damaged bases. Has a preference for oxidized purines, such as 7,8-dihydro-8-oxoguanine (8-oxoG). Has AP (apurinic/apyrimidinic) lyase activity and introduces nicks in the DNA strand. Cleaves the DNA backbone by beta-delta elimination to generate a single-strand break at the site of the removed base with both 3'- and 5'-phosphates. The chain is Formamidopyrimidine-DNA glycosylase (mutM) from Mycoplasma genitalium (strain ATCC 33530 / DSM 19775 / NCTC 10195 / G37) (Mycoplasmoides genitalium).